A 551-amino-acid chain; its full sequence is Dihydroxy-acid dehydratase (551 aa).

Mg(2+) is bound at residue D78. Position 119 (C119) interacts with [2Fe-2S] cluster. Positions 120 and 121 each coordinate Mg(2+). Position 121 is an N6-carboxylysine (K121). C191 contributes to the [2Fe-2S] cluster binding site. A Mg(2+)-binding site is contributed by E441. Residue S467 is the Proton acceptor of the active site.

It belongs to the IlvD/Edd family. In terms of assembly, homodimer. It depends on [2Fe-2S] cluster as a cofactor. Mg(2+) serves as cofactor.

It carries out the reaction (2R)-2,3-dihydroxy-3-methylbutanoate = 3-methyl-2-oxobutanoate + H2O. The enzyme catalyses (2R,3R)-2,3-dihydroxy-3-methylpentanoate = (S)-3-methyl-2-oxopentanoate + H2O. The protein operates within amino-acid biosynthesis; L-isoleucine biosynthesis; L-isoleucine from 2-oxobutanoate: step 3/4. Its pathway is amino-acid biosynthesis; L-valine biosynthesis; L-valine from pyruvate: step 3/4. In terms of biological role, functions in the biosynthesis of branched-chain amino acids. Catalyzes the dehydration of (2R,3R)-2,3-dihydroxy-3-methylpentanoate (2,3-dihydroxy-3-methylvalerate) into 2-oxo-3-methylpentanoate (2-oxo-3-methylvalerate) and of (2R)-2,3-dihydroxy-3-methylbutanoate (2,3-dihydroxyisovalerate) into 2-oxo-3-methylbutanoate (2-oxoisovalerate), the penultimate precursor to L-isoleucine and L-valine, respectively. The chain is Dihydroxy-acid dehydratase from Pyrococcus furiosus (strain ATCC 43587 / DSM 3638 / JCM 8422 / Vc1).